A 289-amino-acid polypeptide reads, in one-letter code: Phospholipase A1 (289 aa).

The first 20 residues, 1-20 (MRTGPGWLLAAAALPFFACA), serve as a signal peptide directing secretion. Residues 21 to 52 (QEATIDKVHDTPAVRGSIIANMLQEHDNPFTL) are Periplasmic-facing. A beta stranded membrane pass occupies residues 53 to 65 (YPYESNYLLYTYT). Topologically, residues 66–84 (SDLNKKAIESYNWSDNANK) are extracellular. The chain crosses the membrane as a beta stranded span at residues 85 to 99 (DEVKFQLSLAFPLWR). The Periplasmic portion of the chain corresponds to 100 to 105 (GILGDN). The beta stranded transmembrane segment at 106–118 (SLLGASYTQRSWW) threads the bilayer. The Extracellular segment spans residues 119–128 (QLSNTGESAP). Ser-126 provides a ligand contact to Ca(2+). The chain crosses the membrane as a beta stranded span at residues 129-148 (FRETNYEPQLFLGFATDYSV). Over 149–150 (GD) the chain is Periplasmic. Residues 151–164 (WTLRDAEFGYNHQS) traverse the membrane as a beta stranded segment. His-162 acts as the Proton acceptor in catalysis. The Nucleophile role is filled by Ser-164. The Extracellular segment spans residues 165-173 (NGRSDPTSR). Positions 167 and 172 each coordinate Ca(2+). Residues 174-186 (SWNRLYSRLMAQN) traverse the membrane as a beta stranded segment. Residues 187-188 (GN) are Periplasmic-facing. The chain crosses the membrane as a beta stranded span at residues 189–198 (WLVEVKPWYV). Residues 199-216 (IGDTSDNKNITKYMGYYQ) are Extracellular-facing. Asp-204 is a Ca(2+) binding site. Residues 217 to 223 (LKIGYQL) traverse the membrane as a beta stranded segment. Residues 224 to 225 (GE) are Periplasmic-facing. Residues 226–234 (AVLSAKGQY) traverse the membrane as a beta stranded segment. Residues 235–241 (NWNTGYG) lie on the Extracellular side of the membrane. A beta stranded transmembrane segment spans residues 242–250 (GAELGVSYP). The Periplasmic segment spans residues 251-255 (ITKHV). Residues 256 to 265 (RFYTQVYSGY) form a beta stranded membrane-spanning segment. The Extracellular portion of the chain corresponds to 266–274 (GESLIDYDF). Residues 275–286 (NQTRVGMGVMLN) traverse the membrane as a beta stranded segment. Over 287–289 (DLF) the chain is Periplasmic.

It belongs to the phospholipase A1 family. Homodimer; dimerization is reversible, and the dimeric form is the active one. Ca(2+) is required as a cofactor.

Its subcellular location is the cell outer membrane. It catalyses the reaction a 1,2-diacyl-sn-glycero-3-phosphocholine + H2O = a 2-acyl-sn-glycero-3-phosphocholine + a fatty acid + H(+). It carries out the reaction a 1,2-diacyl-sn-glycero-3-phosphocholine + H2O = a 1-acyl-sn-glycero-3-phosphocholine + a fatty acid + H(+). Hydrolysis of phosphatidylcholine with phospholipase A2 (EC 3.1.1.4) and phospholipase A1 (EC 3.1.1.32) activities. The chain is Phospholipase A1 (pldA) from Proteus vulgaris.